Here is a 141-residue protein sequence, read N- to C-terminus: Hemoglobin subunit alpha-D (141 aa).

The Globin domain occupies 1 to 141 (MLTADDKKLI…VASVLAEKYR (141 aa)). Heme b-binding residues include histidine 58 and histidine 87.

It belongs to the globin family. In terms of assembly, heterotetramer of two alpha-D chains and two beta chains. Red blood cells.

In terms of biological role, involved in oxygen transport from the lung to the various peripheral tissues. The protein is Hemoglobin subunit alpha-D (HBAD) of Rhea americana (Greater rhea).